The sequence spans 149 residues: Protein SprT-like (149 aa).

The region spanning 5–143 (DYVKQVSLED…CGLCRGKLLL (139 aa)) is the SprT-like domain. H64 contributes to the Zn(2+) binding site. Residue E65 is part of the active site. H68 provides a ligand contact to Zn(2+).

Belongs to the SprT family. It depends on Zn(2+) as a cofactor.

The protein localises to the cytoplasm. This is Protein SprT-like from Streptococcus pneumoniae (strain Hungary19A-6).